Here is a 576-residue protein sequence, read N- to C-terminus: Proline--tRNA ligase (576 aa).

The protein belongs to the class-II aminoacyl-tRNA synthetase family. ProS type 1 subfamily. In terms of assembly, homodimer.

Its subcellular location is the cytoplasm. The catalysed reaction is tRNA(Pro) + L-proline + ATP = L-prolyl-tRNA(Pro) + AMP + diphosphate. Catalyzes the attachment of proline to tRNA(Pro) in a two-step reaction: proline is first activated by ATP to form Pro-AMP and then transferred to the acceptor end of tRNA(Pro). As ProRS can inadvertently accommodate and process non-cognate amino acids such as alanine and cysteine, to avoid such errors it has two additional distinct editing activities against alanine. One activity is designated as 'pretransfer' editing and involves the tRNA(Pro)-independent hydrolysis of activated Ala-AMP. The other activity is designated 'posttransfer' editing and involves deacylation of mischarged Ala-tRNA(Pro). The misacylated Cys-tRNA(Pro) is not edited by ProRS. This Magnetococcus marinus (strain ATCC BAA-1437 / JCM 17883 / MC-1) protein is Proline--tRNA ligase.